The chain runs to 654 residues: Bifunctional 3'-phosphoadenosine 5'-phosphosulfate synthase pps-1 (654 aa).

A disordered region spans residues 1 to 26 (MLTPRDENNEGDAMPMLKKPRYSSLS). Residues 1–231 (MLTPRDENNE…VLDHLESKGL (231 aa)) are adenylyl-sulfate kinase. 66 to 71 (GAGKTT) contributes to the ATP binding site. Residues 93 to 96 (DNIR), F105, 110 to 113 (RQEN), 136 to 137 (IS), K175, and 190 to 191 (GF) contribute to the adenosine 5'-phosphosulfate site. Residues C218, 449–452 (QLRN), 550–554 (GRDPA), and A592 contribute to the ATP site. The tract at residues 242–653 (VRELFVSDDL…AGYYKSLQNS (412 aa)) is sulfate adenylyltransferase.

The protein in the N-terminal section; belongs to the APS kinase family. It in the C-terminal section; belongs to the sulfate adenylyltransferase family.

It is found in the nucleus. It catalyses the reaction sulfate + ATP + H(+) = adenosine 5'-phosphosulfate + diphosphate. The enzyme catalyses adenosine 5'-phosphosulfate + ATP = 3'-phosphoadenylyl sulfate + ADP + H(+). It functions in the pathway sulfur metabolism; sulfate assimilation. Functionally, bifunctional enzyme with both ATP sulfurylase and APS kinase activity, which mediates two steps in the sulfate activation pathway. The first step is the transfer of a sulfate group to ATP to yield adenosine 5'-phosphosulfate (APS), and the second step is the transfer of a phosphate group from ATP to APS yielding 3'-phosphoadenylylsulfate (PAPS: activated sulfate donor used by sulfotransferase). Required for normal growth and development. Involved in several aspects of both embryonic and postembryonic development, including molting, changes in cell shape, and patterning of epithelial and muscle cells. This chain is Bifunctional 3'-phosphoadenosine 5'-phosphosulfate synthase pps-1, found in Caenorhabditis elegans.